A 540-amino-acid polypeptide reads, in one-letter code: Threonine--tRNA ligase catalytic subunit (540 aa).

Residues 134-428 (DHRIIGERLD…LLEHFRGKLP (295 aa)) are catalytic. Residues Cys226, His277, and His405 each contribute to the Zn(2+) site.

Belongs to the class-II aminoacyl-tRNA synthetase family. Homodimer. Probably interacts with its editing subunit. Zn(2+) serves as cofactor.

The protein resides in the cytoplasm. The enzyme catalyses tRNA(Thr) + L-threonine + ATP = L-threonyl-tRNA(Thr) + AMP + diphosphate + H(+). Catalyzes the attachment of threonine to tRNA(Thr) in a two-step reaction: L-threonine is first activated by ATP to form Thr-AMP and then transferred to the acceptor end of tRNA(Thr). Also activates L-serine and transfers it to tRNA(Thr) but cannot deacylate incorrectly charged amino acid; unlike most archaea the editing function is found in a freestanding protein. This Sulfurisphaera tokodaii (strain DSM 16993 / JCM 10545 / NBRC 100140 / 7) (Sulfolobus tokodaii) protein is Threonine--tRNA ligase catalytic subunit.